A 1167-amino-acid polypeptide reads, in one-letter code: White collar 1 protein (1167 aa).

Disordered regions lie at residues Met1–Gly91 and Ser307–Gln355. A compositionally biased stretch (low complexity) spans Gln21 to Gln57. 2 stretches are compositionally biased toward polar residues: residues Thr70 to Gly91 and Ser307 to Ile325. Low complexity predominate over residues Val335–Pro348. The region spanning Lys381 to Val452 is the PAS 1 domain. Cys428 carries the S-4a-FMN cysteine modification. Residues Leu469–Cys508 enclose the PAC 1 domain. The 71-residue stretch at Lys574–Thr644 folds into the PAS 2 domain. Positions Phe650–Leu691 constitute a PAC 2 domain. The PAS 3 domain maps to Arg693–Lys763. A compositionally biased stretch (low complexity) spans Met849–Met861. Disordered stretches follow at residues Met849–Gln872, Lys918–Asn952, Gln966–Thr1047, and Val1060–Val1167. The GATA-type zinc-finger motif lies at Cys934 to Cys959. Over residues Gly968–Arg977 the composition is skewed to polar residues. The segment covering Lys986–Ser995 has biased composition (low complexity). Residues Asp1004 to Ser1033 show a composition bias toward polar residues. 2 stretches are compositionally biased toward low complexity: residues Ala1036–Thr1047 and Gln1104–Gln1128.

In terms of assembly, heterodimer of wc-1 and wc-2. Post-translationally, FMN binds covalently to cysteine after exposure to blue light and is reversed in the dark.

It localises to the nucleus. May function as a transcription factor involved in light regulation. Binds and affects blue light regulation of the al-3 gene. Wc-1 and wc-2 proteins interact via homologous PAS domains, bind to promoters of light regulated genes such as frq, and activate transcription. This chain is White collar 1 protein (wc-1), found in Neurospora crassa (strain ATCC 24698 / 74-OR23-1A / CBS 708.71 / DSM 1257 / FGSC 987).